The sequence spans 227 residues: Iron-regulated surface determinant protein C (227 aa).

An N-terminal signal peptide occupies residues 1–28 (MKNILKVFNTMILALIIIIATFSNTANA). In terms of domain architecture, NEAT spans 29-150 (ADSGTLNYEV…KFNGPSDVAG (122 aa)). Heme-binding residues include S47, I48, Y132, and Y136. The interval 149–191 (AGANAPGKDDKNSASGSDKGSDGATTGQSESNSSNKDKVENPQ) is disordered. Residues 161-172 (SASGSDKGSDGA) show a composition bias toward low complexity. The span at 173 to 182 (TTGQSESNSS) shows a compositional bias: polar residues. Positions 189–193 (NPQTN) match the NPQTN sorting signal motif. T192 carries the post-translational modification Pentaglycyl murein peptidoglycan amidated threonine. A propeptide spans 193–227 (NAGTPAYIYAIPVASLALLIAITLFVRKKSKGNVE) (removed by sortase B).

Belongs to the IsdC family. As to quaternary structure, monomer. Interacts with IsdA.

The protein resides in the secreted. It localises to the cell wall. In terms of biological role, involved in heme (porphyrin) scavenging. Binds hemoglobin and almost exclusively free-base protoporphyrin IX. Probably has a role as the central conduit of the isd heme uptake system, i.e. mediates the transfer of the iron-containing nutrient from IsdABH to the membrane translocation system IsdDEF. Hemin-free IsdC (apo-IsdC) acquires hemin from hemin-containing IsdA (holo-IsdA) probably through the activated holo-IsdA-apo-IsdC complex and due to the higher affinity of apo-IsdC for the cofactor. The reaction is reversible. The sequence is that of Iron-regulated surface determinant protein C (isdC) from Staphylococcus aureus (strain MRSA252).